The following is a 1241-amino-acid chain: ATP-dependent helicase/nuclease subunit A (1241 aa).

A UvrD-like helicase ATP-binding domain is found at 12–485 (SQWTDDQWKA…IDLAKNFRSR (474 aa)). ATP is bound at residue 33-40 (AAAGSGKT). The region spanning 505–805 (GEIDYDADAE…RIMTIHKSKG (301 aa)) is the UvrD-like helicase C-terminal domain.

This sequence belongs to the helicase family. AddA subfamily. As to quaternary structure, heterodimer of AddA and AddB/RexB. The cofactor is Mg(2+).

It carries out the reaction Couples ATP hydrolysis with the unwinding of duplex DNA by translocating in the 3'-5' direction.. The enzyme catalyses ATP + H2O = ADP + phosphate + H(+). Its function is as follows. The heterodimer acts as both an ATP-dependent DNA helicase and an ATP-dependent, dual-direction single-stranded exonuclease. Recognizes the chi site generating a DNA molecule suitable for the initiation of homologous recombination. The AddA nuclease domain is required for chi fragment generation; this subunit has the helicase and 3' -&gt; 5' nuclease activities. This chain is ATP-dependent helicase/nuclease subunit A, found in Bacillus anthracis.